The chain runs to 904 residues: Translation initiation factor IF-2 (904 aa).

The segment at 239-316 (QAATQAKTSE…DDGQGSFQAP (78 aa)) is disordered. Over residues 248–278 (EGAEKGTLHKKPETPGKKGDKGGRAADDGKK) the composition is skewed to basic and acidic residues. The tr-type G domain maps to 404–571 (HRAPVVTVMG…QVLLQAEILE (168 aa)). The interval 413–420 (GHVDHGKT) is G1. 413–420 (GHVDHGKT) serves as a coordination point for GTP. The G2 stretch occupies residues 438–442 (GITQH). A G3 region spans residues 459 to 462 (DTPG). Residues 459–463 (DTPGH) and 513–516 (NKID) contribute to the GTP site. Residues 513–516 (NKID) form a G4 region. The tract at residues 549 to 551 (SAK) is G5.

This sequence belongs to the TRAFAC class translation factor GTPase superfamily. Classic translation factor GTPase family. IF-2 subfamily.

It localises to the cytoplasm. In terms of biological role, one of the essential components for the initiation of protein synthesis. Protects formylmethionyl-tRNA from spontaneous hydrolysis and promotes its binding to the 30S ribosomal subunits. Also involved in the hydrolysis of GTP during the formation of the 70S ribosomal complex. The polypeptide is Translation initiation factor IF-2 (Dechloromonas aromatica (strain RCB)).